Consider the following 186-residue polypeptide: Threonylcarbamoyl-AMP synthase (186 aa).

The YrdC-like domain occupies 5–186 (TQSINDAVKC…DAITGEILRL (182 aa)).

Belongs to the SUA5 family. TsaC subfamily.

It is found in the cytoplasm. It carries out the reaction L-threonine + hydrogencarbonate + ATP = L-threonylcarbamoyladenylate + diphosphate + H2O. Functionally, required for the formation of a threonylcarbamoyl group on adenosine at position 37 (t(6)A37) in tRNAs that read codons beginning with adenine. Catalyzes the conversion of L-threonine, HCO(3)(-)/CO(2) and ATP to give threonylcarbamoyl-AMP (TC-AMP) as the acyladenylate intermediate, with the release of diphosphate. This is Threonylcarbamoyl-AMP synthase from Coxiella burnetii (strain RSA 331 / Henzerling II).